The following is a 119-amino-acid chain: Large ribosomal subunit protein bL20 (119 aa).

It belongs to the bacterial ribosomal protein bL20 family.

Binds directly to 23S ribosomal RNA and is necessary for the in vitro assembly process of the 50S ribosomal subunit. It is not involved in the protein synthesizing functions of that subunit. The polypeptide is Large ribosomal subunit protein bL20 (Herminiimonas arsenicoxydans).